A 234-amino-acid chain; its full sequence is Core atranone cluster (CAC) protein 1 (234 aa).

It functions in the pathway mycotoxin biosynthesis. Its function is as follows. Part of the core atranone cluster (CAC) which products are predicted to catalyze most or all steps of mycotoxin atranone synthesis, starting from geranylgeranyl pyrophosphate (GGPP). The initial cyclization of GGPP to dolabellane is probably performed by the terpene cyclase ATR13. The Baeyer-Villiger oxidation near the end of the atranone synthesis, which converts atranones D and E to atranones F and G is predicted to be catalyzed by the monooxygenase ATR8. Of the CAC's other predicted gene products, the reducing PKS ATR6 might synthesize a polyketide chain. This polyketide is probably transferred onto the atranone backbone by the polyketide transferase ATR5. Other predicted CAC products include 4 oxygenases (ATR2, ATR3, ATR4, and ATR14), 3 short-chain reductases (ATR7, ATR9, and ATR10), and a methyltransferase (ATR12). These may all be involved in the various steps of atranone biosynthesis, although their specific roles must await experimental determination. The sequence is that of Core atranone cluster (CAC) protein 1 from Stachybotrys chlorohalonatus (strain IBT 40285).